Reading from the N-terminus, the 66-residue chain is Large ribosomal subunit protein bL32 (66 aa).

Residues 1 to 18 are compositionally biased toward basic residues; that stretch reads MAIVPKRKTSKQRKHKRR. The interval 1-21 is disordered; it reads MAIVPKRKTSKQRKHKRRTND.

It belongs to the bacterial ribosomal protein bL32 family.

In Mycoplasmopsis agalactiae (strain NCTC 10123 / CIP 59.7 / PG2) (Mycoplasma agalactiae), this protein is Large ribosomal subunit protein bL32.